A 1071-amino-acid chain; its full sequence is Exportin-1 (1071 aa).

Residues 46–112 enclose the Importin N-terminal domain; the sequence is AQEVLTHLKE…KKYVVGLIIK (67 aa). HEAT repeat units lie at residues 217–240, 241–277, 354–472, 515–553, 560–597, and 602–639; these read QNAPLVHATLETLLRFLNWIPLGY, IFETKLISTLIYKFLNVPMFRNVSLKCLTEIAGVSVS, MLLV…YVDT, RFLVTVIKDLLGLCEQKRGKDNKAIIASNIMYIVGQYPR, KFLKTVVNKLFEFMHETHDGVQDMACDTFIKIAQKCRR, and VQVGEVMPFIDEILNNINTIICDLQPQQVHTFYEAVGY. Positions 327-450 are necessary for interaction with Ran and nuclear export complex formation; it reads CTFLKEHGQL…VREFMKDTDS (124 aa). Position 391 is a phosphoserine (Ser391). The tract at residues 411-481 is necessary for interaction with RANBP3; the sequence is TVLSKVRLLM…TEIIMTKKLQ (71 aa). Lys446 is modified (N6-acetyllysine). Thr448 carries the post-translational modification Phosphothreonine. Ser450 is modified (phosphoserine). The residue at position 454 (Tyr454) is a Phosphotyrosine. Lys693 carries the N6-acetyllysine modification. HEAT repeat units lie at residues 775 to 813, 885 to 916, 917 to 954, and 1002 to 1039; these read NFVPPLLDAVLIDYQRNVPAAREPEVLSTMAIIVNKLGG, TMRNVADTGLQILFTLLQNVAQEEAAAQSFYQ, TYFCDILQHIFSVVTDTSHTAGLTMHASILAYMFNLVE, and FSLNQDIPAFKEHLRDFLVQIKEFAGEDTSDLFLEERE. Position 1031 is a phosphoserine (Ser1031).

This sequence belongs to the exportin family. As to quaternary structure, found in a U snRNA export complex with PHAX/RNUXA, NCBP1/CBP80, NCBP2/CBP20, RAN, XPO1 and m7G-capped RNA. Component of a nuclear export receptor complex composed of KPNB1, RAN, SNUPN and XPO1. Found in a trimeric export complex with SNUPN, RAN and XPO1. Found in a nuclear export complex with RANBP3 and RAN. Found in a 60S ribosomal subunit export complex with NMD3, RAN, XPO1. Interacts with DDX3X, NMD3, NUP42, NUP88, NUP214, RANBP3 and TERT. Interacts with NEMF (via its N-terminus). Interacts with the monomeric form of BIRC5/survivin deacetylated at 'Lys-129'. Interacts with SERTAD2; the interaction translocates SERTAD2 out of the nucleus. Interacts with ATF2. Interacts with SLC35G1 and STIM1. Interacts with DCAF8. Interacts with DTNBP1 and the interaction translocates DTNBP1 out of the nucleus. Interacts with CPEB3. Interacts with HAX1. Interacts with BOK; translocates to the cytoplasm. Interacts with HSP90AB1. Interacts with LRPPRC; interacts with LRPPRC alone and also when LRPPRC is in complex with EIF4E and with EIF4E sensitivity element (4ESE)-containing mRNAs to form an EIF4E-dependent mRNA export complex.

It is found in the cytoplasm. The protein localises to the nucleus. It localises to the nucleoplasm. Its subcellular location is the cajal body. The protein resides in the nucleolus. Functionally, mediates the nuclear export of cellular proteins (cargos) bearing a leucine-rich nuclear export signal (NES) and of RNAs. In the nucleus, in association with RANBP3, binds cooperatively to the NES on its target protein and to the GTPase Ran in its active GTP-bound form. Docking of this complex to the nuclear pore complex (NPC) is mediated through binding to nucleoporins. Upon transit of a nuclear export complex into the cytoplasm, disassembling of the complex and hydrolysis of Ran-GTP to Ran-GDP (induced by RANBP1 and RANGAP1, respectively) cause release of the cargo from the export receptor. The directionality of nuclear export is thought to be conferred by an asymmetric distribution of the GTP- and GDP-bound forms of Ran between the cytoplasm and nucleus. Involved in U3 snoRNA transport from Cajal bodies to nucleoli. Binds to late precursor U3 snoRNA bearing a TMG cap. This is Exportin-1 (Xpo1) from Mus musculus (Mouse).